Here is a 197-residue protein sequence, read N- to C-terminus: Protein shisa-4 (197 aa).

An N-terminal signal peptide occupies residues M1 to A27. Residues G28–A87 are Extracellular-facing. Residues G88–L108 traverse the membrane as a helical segment. At C109–A197 the chain is on the cytoplasmic side.

The protein belongs to the shisa family.

It is found in the membrane. In Homo sapiens (Human), this protein is Protein shisa-4 (SHISA4).